The chain runs to 398 residues: Histone-lysine N-methyltransferase ASHR2 (398 aa).

An SET domain is found at 11–270 (TLLRVAEIGG…EGREVCLSYF (260 aa)).

It belongs to the class V-like SAM-binding methyltransferase superfamily. Histone-lysine methyltransferase family. SET2 subfamily.

The protein localises to the nucleus. It localises to the chromosome. It catalyses the reaction L-lysyl-[histone] + S-adenosyl-L-methionine = N(6)-methyl-L-lysyl-[histone] + S-adenosyl-L-homocysteine + H(+). In terms of biological role, histone methyltransferase. This Arabidopsis thaliana (Mouse-ear cress) protein is Histone-lysine N-methyltransferase ASHR2 (ASHR2).